The chain runs to 255 residues: MKKFFITANWKLNGNIKMISSFFKYLKLYSSSYLEKNTVIIAPPTIYLERVCKNISNMNIFLGSQNVDINLNGAFTGETSILMLRDIGVKYVIIGHSERRFLHHETDDIIAKKFHLIKKSNLTPILCVGETEIEKKHNQTEQVIQRQLNLILKNLGTSAFKNIIIAYEPIWAIGTGVSADPEHVQLIHVFIKNYILKYSSINRNDIIIQYGGSINHTNVKKFIEQPDINGLLIGNSSLSAKEFLEIIKIAHEHYS.

Position 9 to 11 (9 to 11 (NWK)) interacts with substrate. H96 (electrophile) is an active-site residue. Residue E168 is the Proton acceptor of the active site. G174 and S213 together coordinate substrate.

Belongs to the triosephosphate isomerase family. As to quaternary structure, homodimer.

The protein resides in the cytoplasm. It catalyses the reaction D-glyceraldehyde 3-phosphate = dihydroxyacetone phosphate. It functions in the pathway carbohydrate biosynthesis; gluconeogenesis. It participates in carbohydrate degradation; glycolysis; D-glyceraldehyde 3-phosphate from glycerone phosphate: step 1/1. Its function is as follows. Involved in the gluconeogenesis. Catalyzes stereospecifically the conversion of dihydroxyacetone phosphate (DHAP) to D-glyceraldehyde-3-phosphate (G3P). The chain is Triosephosphate isomerase from Buchnera aphidicola subsp. Acyrthosiphon pisum (strain APS) (Acyrthosiphon pisum symbiotic bacterium).